The following is a 116-amino-acid chain: Chaperone protein SicP (116 aa).

The protein belongs to the SicP family.

It is found in the cytoplasm. In terms of biological role, molecular chaperone required for SptP stabilization and secretion. This chain is Chaperone protein SicP (sicP), found in Salmonella paratyphi A (strain ATCC 9150 / SARB42).